Consider the following 282-residue polypeptide: Large ribosomal subunit protein uL2c (282 aa).

Residues 230-261 (SAQNAVDHPHGGGEGKAPIGRIPSTPWGKPAL) form a disordered region.

The protein belongs to the universal ribosomal protein uL2 family. Part of the 50S ribosomal subunit.

The protein resides in the plastid. The chain is Large ribosomal subunit protein uL2c (rpl2) from Helicosporidium sp. subsp. Simulium jonesii (Green alga).